The sequence spans 407 residues: Imidazolonepropionase (407 aa).

H74 and H76 together coordinate Fe(3+). Positions 74 and 76 each coordinate Zn(2+). Residues R83, Y146, and H179 each contribute to the 4-imidazolone-5-propanoate site. Y146 is a binding site for N-formimidoyl-L-glutamate. H244 lines the Fe(3+) pocket. Position 244 (H244) interacts with Zn(2+). A 4-imidazolone-5-propanoate-binding site is contributed by Q247. D319 serves as a coordination point for Fe(3+). Residue D319 coordinates Zn(2+). N321 and G323 together coordinate N-formimidoyl-L-glutamate. Position 324 (T324) interacts with 4-imidazolone-5-propanoate.

The protein belongs to the metallo-dependent hydrolases superfamily. HutI family. Requires Zn(2+) as cofactor. Fe(3+) is required as a cofactor.

Its subcellular location is the cytoplasm. It catalyses the reaction 4-imidazolone-5-propanoate + H2O = N-formimidoyl-L-glutamate. Its pathway is amino-acid degradation; L-histidine degradation into L-glutamate; N-formimidoyl-L-glutamate from L-histidine: step 3/3. Its function is as follows. Catalyzes the hydrolytic cleavage of the carbon-nitrogen bond in imidazolone-5-propanoate to yield N-formimidoyl-L-glutamate. It is the third step in the universal histidine degradation pathway. This chain is Imidazolonepropionase, found in Salmonella paratyphi C (strain RKS4594).